We begin with the raw amino-acid sequence, 320 residues long: Acetyl-coenzyme A carboxylase carboxyl transferase subunit beta (320 aa).

Positions 25–294 (VWTKCDSCGQ…AKDEDELLGE (270 aa)) constitute a CoA carboxyltransferase N-terminal domain. Positions 29, 32, 48, and 51 each coordinate Zn(2+). The C4-type zinc finger occupies 29-51 (CDSCGQVLYRAELERNLEVCPKC). A compositionally biased stretch (acidic residues) spans 295–310 (EMIADDIESSDNEPEI). The segment at 295–320 (EMIADDIESSDNEPEINIETNKKEDV) is disordered.

This sequence belongs to the AccD/PCCB family. Acetyl-CoA carboxylase is a heterohexamer composed of biotin carboxyl carrier protein (AccB), biotin carboxylase (AccC) and two subunits each of ACCase subunit alpha (AccA) and ACCase subunit beta (AccD). Zn(2+) is required as a cofactor.

It localises to the cytoplasm. The enzyme catalyses N(6)-carboxybiotinyl-L-lysyl-[protein] + acetyl-CoA = N(6)-biotinyl-L-lysyl-[protein] + malonyl-CoA. It functions in the pathway lipid metabolism; malonyl-CoA biosynthesis; malonyl-CoA from acetyl-CoA: step 1/1. Its function is as follows. Component of the acetyl coenzyme A carboxylase (ACC) complex. Biotin carboxylase (BC) catalyzes the carboxylation of biotin on its carrier protein (BCCP) and then the CO(2) group is transferred by the transcarboxylase to acetyl-CoA to form malonyl-CoA. The sequence is that of Acetyl-coenzyme A carboxylase carboxyl transferase subunit beta from Proteus mirabilis (strain HI4320).